An 881-amino-acid chain; its full sequence is Alanine--tRNA ligase (881 aa).

Basic and acidic residues predominate over residues 422–440 (FEDEMQKQKERARSARSTE). The disordered stretch occupies residues 422-445 (FEDEMQKQKERARSARSTEKSMGV). Zn(2+) contacts are provided by histidine 567, histidine 571, cysteine 669, and histidine 673.

This sequence belongs to the class-II aminoacyl-tRNA synthetase family. Zn(2+) is required as a cofactor.

It localises to the cytoplasm. The catalysed reaction is tRNA(Ala) + L-alanine + ATP = L-alanyl-tRNA(Ala) + AMP + diphosphate. Catalyzes the attachment of alanine to tRNA(Ala) in a two-step reaction: alanine is first activated by ATP to form Ala-AMP and then transferred to the acceptor end of tRNA(Ala). Also edits incorrectly charged Ser-tRNA(Ala) and Gly-tRNA(Ala) via its editing domain. The polypeptide is Alanine--tRNA ligase (Pediococcus pentosaceus (strain ATCC 25745 / CCUG 21536 / LMG 10740 / 183-1w)).